Consider the following 252-residue polypeptide: Phosphomannomutase (252 aa).

Residue aspartate 13 is the Nucleophile of the active site. 2 residues coordinate Mg(2+): aspartate 13 and aspartate 15. Catalysis depends on aspartate 15, which acts as the Proton donor/acceptor. Positions 22, 124, 135, 142, 180, and 182 each coordinate alpha-D-mannose 1-phosphate. The Mg(2+) site is built by aspartate 208, tyrosine 220, and threonine 225.

This sequence belongs to the eukaryotic PMM family. Homodimer. The cofactor is Mg(2+).

It is found in the cytoplasm. The enzyme catalyses alpha-D-mannose 1-phosphate = D-mannose 6-phosphate. It participates in nucleotide-sugar biosynthesis; GDP-alpha-D-mannose biosynthesis; alpha-D-mannose 1-phosphate from D-fructose 6-phosphate: step 2/2. In terms of biological role, catalyzes the interconversion of mannose-6-phosphate to mannose-1-phosphate, the precursor for the synthesis of GDP-mannose. GDP-mannose is an essential sugar nucleotide for the synthesis of D-mannose-containing cell wall polysaccharides (galactomannans and glucomannans), glycolipids, glycoproteins and the antioxidant L-ascorbate. Can complement the yeast temperature-sensitive mutant sec53-6. The sequence is that of Phosphomannomutase from Solanum lycopersicum (Tomato).